We begin with the raw amino-acid sequence, 121 residues long: Flagellar protein FliT (121 aa).

A required for homodimerization region spans residues 1–50; it reads MNHAPHLYFAWQQLVEKSQLMLRLATEEQWDELIASEMAYVNAVQEIAHL. Positions 60–98 are fliD binding; it reads MQEQLRPMLRLILDNESKVKQLLQIRMDELAKLVGQSSV.

This sequence belongs to the FliT family. In terms of assembly, homodimer. Interacts with FliD and FlhC.

Its subcellular location is the cytoplasm. The protein localises to the cytosol. Its function is as follows. Dual-function protein that regulates the transcription of class 2 flagellar operons and that also acts as an export chaperone for the filament-capping protein FliD. As a transcriptional regulator, acts as an anti-FlhDC factor; it directly binds FlhC, thus inhibiting the binding of the FlhC/FlhD complex to class 2 promoters, resulting in decreased expression of class 2 flagellar operons. As a chaperone, effects FliD transition to the membrane by preventing its premature polymerization, and by directing it to the export apparatus. This Escherichia coli O157:H7 protein is Flagellar protein FliT.